A 336-amino-acid polypeptide reads, in one-letter code: Toluate 1,2-dioxygenase electron transfer component (336 aa).

A 2Fe-2S ferredoxin-type domain is found at 3–97 (HKVATDFEDG…DCVIRVPAAS (95 aa)). 4 residues coordinate [2Fe-2S] cluster: cysteine 40, cysteine 45, cysteine 48, and cysteine 81. The segment at 99–336 (VCKTQQAGYQ…FYYEKFAASA (238 aa)) is ferredoxin-reductase. The FAD-binding FR-type domain maps to 104–204 (QAGYQAAISN…AGPLGAFYLR (101 aa)).

Belongs to the bacterial ring-hydroxylating dioxygenase ferredoxin reductase family. This dioxygenase system consists of three proteins: the two subunits of the hydroxylase component (XylX and XylY), and an electron transfer component (XylZ). The cofactor is FAD. [2Fe-2S] cluster is required as a cofactor.

The catalysed reaction is 2 reduced [2Fe-2S]-[ferredoxin] + NAD(+) + H(+) = 2 oxidized [2Fe-2S]-[ferredoxin] + NADH. Electron transfer component of toluate 1,2-dioxygenase system. The sequence is that of Toluate 1,2-dioxygenase electron transfer component (xylZ) from Pseudomonas putida (Arthrobacter siderocapsulatus).